Consider the following 336-residue polypeptide: Probable tRNA N6-adenosine threonylcarbamoyltransferase (336 aa).

A divalent metal cation-binding residues include His-110, His-114, and Tyr-131. Residues 131–135 (YVSGG), Asp-163, Gly-178, Glu-182, and Asn-267 contribute to the substrate site. Asp-295 is a binding site for a divalent metal cation.

It belongs to the KAE1 / TsaD family. Component of the EKC/KEOPS complex; the whole complex dimerizes. A divalent metal cation is required as a cofactor.

Its subcellular location is the cytoplasm. It localises to the nucleus. The enzyme catalyses L-threonylcarbamoyladenylate + adenosine(37) in tRNA = N(6)-L-threonylcarbamoyladenosine(37) in tRNA + AMP + H(+). In terms of biological role, component of the EKC/KEOPS complex that is required for the formation of a threonylcarbamoyl group on adenosine at position 37 (t(6)A37) in tRNAs that read codons beginning with adenine. The complex is probably involved in the transfer of the threonylcarbamoyl moiety of threonylcarbamoyl-AMP (TC-AMP) to the N6 group of A37. Osgep likely plays a direct catalytic role in this reaction, but requires other protein(s) of the complex to fulfill this activity. The polypeptide is Probable tRNA N6-adenosine threonylcarbamoyltransferase (Dictyostelium discoideum (Social amoeba)).